The chain runs to 125 residues: Classical arabinogalactan protein 27 (125 aa).

Residues 1-21 (MASSILLTLITFIFLSSLSLS) form the signal peptide. Residues 20-36 (LSSPTTNTIPSSQTISP) show a composition bias toward low complexity. Positions 20-95 (LSSPTTNTIP…ASPPASSLAS (76 aa)) are disordered. Positions 53–66 (AVSSTQTIPSSSTL) are enriched in polar residues. Residues 77-95 (DPDPAFAPSASPPASSLAS) show a composition bias toward low complexity. S98 carries GPI-anchor amidated serine lipidation. The propeptide at 99 to 125 (QAPGVFIYFVFAAVYCFSLRLLAVSAI) is removed in mature form.

This sequence belongs to the classical AGP family. O-glycosylated on the hydroxyproline residues.

The protein localises to the cell membrane. In terms of biological role, proteoglycan that seems to be implicated in diverse developmental roles such as differentiation, cell-cell recognition, embryogenesis and programmed cell death. The polypeptide is Classical arabinogalactan protein 27 (AGP27) (Arabidopsis thaliana (Mouse-ear cress)).